A 198-amino-acid polypeptide reads, in one-letter code: Holliday junction branch migration complex subunit RuvA (198 aa).

Residues 1–63 are domain I; it reads MYDYIKGQLT…EDAQLLFGFH (63 aa). Residues 64-142 form a domain II region; it reads SEEEKDVFLK…EAPKEESSKP (79 aa). Positions 143 to 147 are flexible linker; that stretch reads PKAKQ. Positions 148–198 are domain III; sequence QGNEQLDEAVEALLALGYKATELKKIRAFFEGTSETAEQYIKSALKMLMKG.

This sequence belongs to the RuvA family. In terms of assembly, homotetramer. Forms an RuvA(8)-RuvB(12)-Holliday junction (HJ) complex. HJ DNA is sandwiched between 2 RuvA tetramers; dsDNA enters through RuvA and exits via RuvB. An RuvB hexamer assembles on each DNA strand where it exits the tetramer. Each RuvB hexamer is contacted by two RuvA subunits (via domain III) on 2 adjacent RuvB subunits; this complex drives branch migration. In the full resolvosome a probable DNA-RuvA(4)-RuvB(12)-RuvC(2) complex forms which resolves the HJ.

It is found in the cytoplasm. Functionally, the RuvA-RuvB-RuvC complex processes Holliday junction (HJ) DNA during genetic recombination and DNA repair, while the RuvA-RuvB complex plays an important role in the rescue of blocked DNA replication forks via replication fork reversal (RFR). RuvA specifically binds to HJ cruciform DNA, conferring on it an open structure. The RuvB hexamer acts as an ATP-dependent pump, pulling dsDNA into and through the RuvAB complex. HJ branch migration allows RuvC to scan DNA until it finds its consensus sequence, where it cleaves and resolves the cruciform DNA. This is Holliday junction branch migration complex subunit RuvA from Streptococcus equi subsp. zooepidemicus (strain H70).